A 354-amino-acid chain; its full sequence is Serum paraoxonase/arylesterase 2 (354 aa).

A disulfide bond links Cys42 and Cys352. Ca(2+) is bound by residues Glu53 and Asp54. His114 (proton acceptor) is an active-site residue. Residues Ile116, Asn167, Asp168, and Asn223 each coordinate Ca(2+). N-linked (GlcNAc...) asparagine glycosylation occurs at Asn254. 2 residues coordinate Ca(2+): Asp268 and Asn269. Residues Asn269 and Asn323 are each glycosylated (N-linked (GlcNAc...) asparagine).

The protein belongs to the paraoxonase family. In terms of assembly, homotrimer. Ca(2+) serves as cofactor. In terms of processing, glycosylated. Post-translationally, the signal sequence is not cleaved.

It is found in the membrane. It catalyses the reaction a phenyl acetate + H2O = a phenol + acetate + H(+). The enzyme catalyses an N-acyl-L-homoserine lactone + H2O = an N-acyl-L-homoserine + H(+). Functionally, capable of hydrolyzing lactones and a number of aromatic carboxylic acid esters. The chain is Serum paraoxonase/arylesterase 2 (Pon2) from Rattus norvegicus (Rat).